The following is a 507-amino-acid chain: Pre-glycoprotein polyprotein GP complex (507 aa).

G2 is lipidated: N-myristoyl glycine; by host. Over 2–17 (GQVVTFLQSLPEVINE) the chain is Extracellular. The chain crosses the membrane as a helical span at residues 18-33 (AINIALIAISIICILK). At 34 to 58 (GLVNFWKCGVVQLAIFLCLAGRKCD) the chain is on the cytoplasmic side. C57 contacts Zn(2+). Topologically, residues 59-445 (GLMIDRRHEL…QGKTPIALTD (387 aa)) are extracellular. Disulfide bonds link C86-C247, C292-C305, C314-C323, and C377-C398. N-linked (GlcNAc...) asparagine; by host glycosylation is found at N89, N111, N179, and N240. N-linked (GlcNAc...) asparagine; by host glycans are attached at residues N378, N386, N403, and N408. The chain crosses the membrane as a helical span at residues 446 to 466 (ICFWSLVFFTSTVFLQLVGIP). Residues 467–507 (THRHLVGEGCPKPHRITSNSLCACGYYKIPKRPTRWVRKGK) lie on the Cytoplasmic side of the membrane. Zn(2+)-binding residues include H468, H470, C476, H480, C488, and C490.

It belongs to the arenaviridae GPC protein family. Interacts with glycoprotein G2. Part of the GP complex (GP-C) together with glycoprotein G1 and glycoprotein G2. The GP-complex interacts with protein Z, which interacts with ribonucleocapsid; these interactions may induce virion budding. As to quaternary structure, homotrimer; disulfide-linked. In pre-fusion state, G1 homotrimers bind G2 homotrimers via ionic interactions. Part of the GP complex (GP-C) together with glycoprotein G2 and the stable signal peptide. The GP-complex interacts with protein Z, which interacts with ribonucleocapsid; these interactions may induce virion budding. In terms of assembly, homotrimer. Interacts with the stable signal peptide. In pre-fusion state, G2 homotrimers bind G1 homotrimers via ionic interactions. Part of the GP complex (GP-C) together with glycoprotein G1 and the stable signal peptide. Acidification in the endosome triggers rearrangements, which ultimately leads to a 6 helix bundle formed by the two heptad repeat domains (HR1 and HR2) in post-fusion state. The GP-complex interacts with protein Z, which interacts with ribonucleocapsid; these interactions may induce virion budding. Specific enzymatic cleavages in vivo yield mature proteins. GP-C polyprotein is cleaved in the endoplasmic reticulum by the host protease MBTPS1. Only cleaved glycoprotein is incorporated into virions. Post-translationally, the SSP remains stably associated with the GP complex following cleavage by signal peptidase and plays crucial roles in the trafficking of GP through the secretory pathway. In terms of processing, myristoylation is necessary for GP2-mediated fusion activity.

Its subcellular location is the virion membrane. It is found in the host endoplasmic reticulum membrane. The protein resides in the host Golgi apparatus membrane. The protein localises to the host cell membrane. Its function is as follows. Functions as a cleaved signal peptide that is retained as the third component of the GP complex (GP-C). Helps to stabilize the spike complex in its native conformation. The SSP is required for efficient glycoprotein expression, post-translational maturation cleavage of G1 and G2, glycoprotein transport to the cell surface plasma membrane, formation of infectious virus particles, and acid pH-dependent glycoprotein-mediated cell fusion. Forms the virion spikes together with glycoprotein G2. The glycoprotein spike trimers are connected to the underlying matrix. Interacts with the host receptor leading to virus endocytosis. In terms of biological role, forms the virion spikes together with glycoprotein G1. The glycoprotein spike trimers are connected to the underlying matrix. Class I viral fusion protein that directs fusion of viral and host endosomal membranes, leading to delivery of the nucleocapsid into the cytoplasm. Membrane fusion is mediated by irreversible conformational changes induced by acidification. This is Pre-glycoprotein polyprotein GP complex from Allpahuayo mammarenavirus (isolate Rat/Peru/CLHP-2472/1997) (ALLV).